Here is a 207-residue protein sequence, read N- to C-terminus: Large ribosomal subunit protein uL4 (207 aa).

Residues 58 to 85 form a disordered region; sequence AGSGKKPFKQKGTGQARQGCRRAPQYPG.

It belongs to the universal ribosomal protein uL4 family. In terms of assembly, part of the 50S ribosomal subunit.

Functionally, one of the primary rRNA binding proteins, this protein initially binds near the 5'-end of the 23S rRNA. It is important during the early stages of 50S assembly. It makes multiple contacts with different domains of the 23S rRNA in the assembled 50S subunit and ribosome. In terms of biological role, forms part of the polypeptide exit tunnel. The polypeptide is Large ribosomal subunit protein uL4 (Geotalea uraniireducens (strain Rf4) (Geobacter uraniireducens)).